Here is a 394-residue protein sequence, read N- to C-terminus: Elongation factor Tu (394 aa).

The region spanning 10–204 (KPHVNIGTIG…AVDSYIPQPV (195 aa)) is the tr-type G domain. Residues 19–26 (GHVDHGKT) are G1. Position 19-26 (19-26 (GHVDHGKT)) interacts with GTP. T26 contributes to the Mg(2+) binding site. The interval 60-64 (GITIS) is G2. Positions 81-84 (DCPG) are G3. GTP-binding positions include 81–85 (DCPGH) and 136–139 (NKVD). Positions 136 to 139 (NKVD) are G4. The segment at 174-176 (SAL) is G5.

Belongs to the TRAFAC class translation factor GTPase superfamily. Classic translation factor GTPase family. EF-Tu/EF-1A subfamily. As to quaternary structure, monomer.

The protein localises to the cytoplasm. It carries out the reaction GTP + H2O = GDP + phosphate + H(+). Functionally, GTP hydrolase that promotes the GTP-dependent binding of aminoacyl-tRNA to the A-site of ribosomes during protein biosynthesis. This Rickettsia canadensis (strain McKiel) protein is Elongation factor Tu.